A 445-amino-acid polypeptide reads, in one-letter code: MKLFGTDGVRGKAGEFLDSFLAMRLAMAAGIYFKDKALTNNILVGKDTRRSGYMIENAIVSGLTSIGYNVIEIGPMPTPAIAFLTEDMRCDAGIMISASHNPYYDNGIKFFDAHGNKLDEQAEAKIEEIYFNDKLIEEARTTKSQIGQAKRIDDVIGRYIVSIKNSFPKELTLKSLRVVLDVAHGASYKVAPTVFRELGADVIVINDKPNGLNINENCGALHPLNLALEVKKFRADVGFAFDGDADRLVVVDEKGEVAHGDSLLGVLALFLKKQGKLKSSVVSTIMSNGALKEFLTKYKIPHETCNVGDKYVLEKLKECGGNFGGEQSGHIIFSDYAKTGDGLVAALQFSALMLSEAKSASEILNQVKPYPQLLHNLKISEKKDLSKLAGLEELKKDLEKKGIASLFRYSGTENLIRLLLEAKDIKLLEKEMKVVESFFMKVLNA.

The active-site Phosphoserine intermediate is Ser-99. Residues Ser-99, Asp-242, Asp-244, and Asp-246 each contribute to the Mg(2+) site. The residue at position 99 (Ser-99) is a Phosphoserine.

This sequence belongs to the phosphohexose mutase family. Mg(2+) serves as cofactor. Post-translationally, activated by phosphorylation.

The catalysed reaction is alpha-D-glucosamine 1-phosphate = D-glucosamine 6-phosphate. Catalyzes the conversion of glucosamine-6-phosphate to glucosamine-1-phosphate. The protein is Phosphoglucosamine mutase of Campylobacter lari (strain RM2100 / D67 / ATCC BAA-1060).